A 177-amino-acid polypeptide reads, in one-letter code: Alkyl hydroperoxide reductase AhpD (177 aa).

C131 serves as the catalytic Proton donor. C131 and C134 form a disulfide bridge. The active-site Cysteine sulfenic acid (-SOH) intermediate is C134.

It belongs to the AhpD family. In terms of assembly, homotrimer.

It catalyses the reaction N(6)-[(R)-dihydrolipoyl]-L-lysyl-[lipoyl-carrier protein] + a hydroperoxide = N(6)-[(R)-lipoyl]-L-lysyl-[lipoyl-carrier protein] + an alcohol + H2O. In terms of biological role, antioxidant protein with alkyl hydroperoxidase activity. Required for the reduction of the AhpC active site cysteine residues and for the regeneration of the AhpC enzyme activity. This chain is Alkyl hydroperoxide reductase AhpD, found in Streptomyces avermitilis (strain ATCC 31267 / DSM 46492 / JCM 5070 / NBRC 14893 / NCIMB 12804 / NRRL 8165 / MA-4680).